We begin with the raw amino-acid sequence, 439 residues long: Proline--tRNA ligase (439 aa).

Belongs to the class-II aminoacyl-tRNA synthetase family. ProS type 2 subfamily. Homodimer.

The protein localises to the cytoplasm. It catalyses the reaction tRNA(Pro) + L-proline + ATP = L-prolyl-tRNA(Pro) + AMP + diphosphate. Its function is as follows. Catalyzes the attachment of proline to tRNA(Pro) in a two-step reaction: proline is first activated by ATP to form Pro-AMP and then transferred to the acceptor end of tRNA(Pro). This Nitrobacter winogradskyi (strain ATCC 25391 / DSM 10237 / CIP 104748 / NCIMB 11846 / Nb-255) protein is Proline--tRNA ligase.